We begin with the raw amino-acid sequence, 124 residues long: Large ribosomal subunit protein bL12 (124 aa).

The disordered stretch occupies residues 99-124 (KEGMNKEDAEKAKADLEAAGAKVELK). Basic and acidic residues predominate over residues 101–114 (GMNKEDAEKAKADL). Positions 115–124 (EAAGAKVELK) are enriched in low complexity.

The protein belongs to the bacterial ribosomal protein bL12 family. As to quaternary structure, homodimer. Part of the ribosomal stalk of the 50S ribosomal subunit. Forms a multimeric L10(L12)X complex, where L10 forms an elongated spine to which 2 to 4 L12 dimers bind in a sequential fashion. Binds GTP-bound translation factors.

Forms part of the ribosomal stalk which helps the ribosome interact with GTP-bound translation factors. Is thus essential for accurate translation. The sequence is that of Large ribosomal subunit protein bL12 from Campylobacter hominis (strain ATCC BAA-381 / DSM 21671 / CCUG 45161 / LMG 19568 / NCTC 13146 / CH001A).